We begin with the raw amino-acid sequence, 343 residues long: Probable long-chain-alcohol O-fatty-acyltransferase 2 (343 aa).

The next 8 membrane-spanning stretches (helical) occupy residues Asn-7–Ser-27, Leu-36–Val-56, Phe-58–Ala-78, Pro-117–Tyr-137, Phe-148–Phe-168, Gly-235–Ile-255, Thr-260–Met-280, and Ala-292–Pro-312.

The protein belongs to the wax synthase family.

The protein resides in the membrane. It catalyses the reaction a long chain fatty alcohol + a fatty acyl-CoA = a wax ester + CoA. In terms of biological role, catalyzes the final step in the synthesis of long-chain linear esters (waxes). In Arabidopsis thaliana (Mouse-ear cress), this protein is Probable long-chain-alcohol O-fatty-acyltransferase 2 (AT2).